Consider the following 111-residue polypeptide: ATP-dependent Clp protease adapter protein ClpS (111 aa).

The protein belongs to the ClpS family. Binds to the N-terminal domain of the chaperone ClpA.

In terms of biological role, involved in the modulation of the specificity of the ClpAP-mediated ATP-dependent protein degradation. The chain is ATP-dependent Clp protease adapter protein ClpS from Legionella pneumophila (strain Corby).